The sequence spans 271 residues: MLPTVFIVSDGTGITAETFAHSILSQFDQKFRLVRVPFVDSLEKAYSTVEKINEAAVHDGRRAIVFTTLVDSVSNDIVKRSNALVLDMFQRFVEPLEQELELKSSHAMGRGHQNADTEEYKTRIEAINFSLAHDDGQSNRNLSEADVILVGVSRSGKTPTSLYLAMQYGVKAANYPLIPEDFERGKLPSALTQHREKLFGLSIDPQRLSEIRNERRPGSKYAAPENCRYEINESEAMMRREGIKWLSSTHKSIEEIATTILQEIRLERQSY.

151–158 serves as a coordination point for ADP; sequence GVSRSGKT.

The protein belongs to the pyruvate, phosphate/water dikinase regulatory protein family. PSRP subfamily.

The enzyme catalyses [pyruvate, water dikinase] + ADP = [pyruvate, water dikinase]-phosphate + AMP + H(+). It carries out the reaction [pyruvate, water dikinase]-phosphate + phosphate + H(+) = [pyruvate, water dikinase] + diphosphate. In terms of biological role, bifunctional serine/threonine kinase and phosphorylase involved in the regulation of the phosphoenolpyruvate synthase (PEPS) by catalyzing its phosphorylation/dephosphorylation. The chain is Putative phosphoenolpyruvate synthase regulatory protein from Burkholderia vietnamiensis (strain G4 / LMG 22486) (Burkholderia cepacia (strain R1808)).